A 337-amino-acid polypeptide reads, in one-letter code: L-Ala-D/L-amino acid epimerase (337 aa).

Residues T129 and K151 to K153 contribute to the substrate site. Residues D177, E203, and D228 each contribute to the Mg(2+) site. Substrate contacts are provided by residues K250 and D300 to D302.

This sequence belongs to the mandelate racemase/muconate lactonizing enzyme family. Mg(2+) serves as cofactor.

Functionally, broad specificity dipeptide epimerase. Catalyzes the epimerization of L-Ala-L-Ala, L-Ala-L-Glu, L-Ala-L-Ser, L-Ala-L-Thr and L-Ala-L-Met (in vitro). This is L-Ala-D/L-amino acid epimerase from Maribacter sp. (strain HTCC2170 / KCCM 42371).